The primary structure comprises 251 residues: Ribosomal RNA small subunit methyltransferase G (251 aa).

Residues Gly74, Phe79, 125 to 126 (AE), and Arg144 contribute to the S-adenosyl-L-methionine site. The segment at 224 to 251 (RPAGLPTQHPLGAIEGAPRVESEEPEEP) is disordered.

It belongs to the methyltransferase superfamily. RNA methyltransferase RsmG family.

Its subcellular location is the cytoplasm. Its function is as follows. Specifically methylates the N7 position of a guanine in 16S rRNA. This chain is Ribosomal RNA small subunit methyltransferase G, found in Gloeobacter violaceus (strain ATCC 29082 / PCC 7421).